Consider the following 131-residue polypeptide: GATA zinc finger domain-containing protein 2 (131 aa).

The span at 21 to 55 (STATDATSADGAASETDAASATDTTSATDPTSATD) shows a compositional bias: low complexity. The interval 21-85 (STATDATSAD…RGRPYISTPP (65 aa)) is disordered. A compositionally biased stretch (polar residues) spans 57–74 (IATTNTTGITSSGPTTNG). Residues 88–115 (CYDCGRTRSPYWRKGTYNGQVVHLCNAC) form a GATA-type zinc finger.

This chain is GATA zinc finger domain-containing protein 2 (comH), found in Dictyostelium discoideum (Social amoeba).